Consider the following 267-residue polypeptide: tRNA pseudouridine synthase A (267 aa).

Asp-53 functions as the Nucleophile in the catalytic mechanism. Tyr-114 lines the substrate pocket.

This sequence belongs to the tRNA pseudouridine synthase TruA family. Homodimer.

The catalysed reaction is uridine(38/39/40) in tRNA = pseudouridine(38/39/40) in tRNA. Functionally, formation of pseudouridine at positions 38, 39 and 40 in the anticodon stem and loop of transfer RNAs. This chain is tRNA pseudouridine synthase A, found in Chlamydia muridarum (strain MoPn / Nigg).